The sequence spans 378 residues: UPF0754 membrane protein BCAH187_A1042 (378 aa).

Transmembrane regions (helical) follow at residues 1–21 and 357–377; these read MNIWLSMLTTTGLGAIIGGFT and YLGALLGGMIGIVQGLLLLFL.

It belongs to the UPF0754 family.

It is found in the cell membrane. This chain is UPF0754 membrane protein BCAH187_A1042, found in Bacillus cereus (strain AH187).